The following is a 387-amino-acid chain: Galactokinase (387 aa).

33 to 36 (EHTD) is a binding site for substrate. ATP is bound by residues S67 and 123–129 (GAGLSSS). S129 and E161 together coordinate Mg(2+). Catalysis depends on D173, which acts as the Proton acceptor. Residue Y223 participates in substrate binding.

Belongs to the GHMP kinase family. GalK subfamily.

The protein localises to the cytoplasm. The enzyme catalyses alpha-D-galactose + ATP = alpha-D-galactose 1-phosphate + ADP + H(+). It participates in carbohydrate metabolism; galactose metabolism. In terms of biological role, catalyzes the transfer of the gamma-phosphate of ATP to D-galactose to form alpha-D-galactose-1-phosphate (Gal-1-P). The polypeptide is Galactokinase (Lacticaseibacillus casei (Lactobacillus casei)).